We begin with the raw amino-acid sequence, 232 residues long: uncharacterized protein (232 aa).

This is an uncharacterized protein from Thermoproteus tenax (TTV1).